A 216-amino-acid chain; its full sequence is Somatotropin (216 aa).

The N-terminal stretch at 1-26 is a signal peptide; it reads MATDSRTSWLLTVSLLCLLWPQEASA. Zn(2+) is bound at residue histidine 45. A disulfide bridge connects residues cysteine 78 and cysteine 189. Serine 131 is subject to Phosphoserine. Glutamate 198 is a Zn(2+) binding site. A disulfide bridge links cysteine 206 with cysteine 214.

The protein belongs to the somatotropin/prolactin family.

The protein resides in the secreted. Functionally, plays an important role in growth control. Its major role in stimulating body growth is to stimulate the liver and other tissues to secrete IGF1. It stimulates both the differentiation and proliferation of myoblasts. It also stimulates amino acid uptake and protein synthesis in muscle and other tissues. This is Somatotropin (Gh1) from Mus musculus (Mouse).